The chain runs to 545 residues: Glucose-6-phosphate isomerase (545 aa).

Catalysis depends on glutamate 351, which acts as the Proton donor. Residues histidine 382 and lysine 510 contribute to the active site.

This sequence belongs to the GPI family.

The protein resides in the cytoplasm. The catalysed reaction is alpha-D-glucose 6-phosphate = beta-D-fructose 6-phosphate. It functions in the pathway carbohydrate biosynthesis; gluconeogenesis. Its pathway is carbohydrate degradation; glycolysis; D-glyceraldehyde 3-phosphate and glycerone phosphate from D-glucose: step 2/4. Functionally, catalyzes the reversible isomerization of glucose-6-phosphate to fructose-6-phosphate. This Shewanella sp. (strain ANA-3) protein is Glucose-6-phosphate isomerase.